The following is a 362-amino-acid chain: Myricetin 3'-O-methyltransferase 4 (362 aa).

Asp229 lines the S-adenosyl-L-methionine pocket. His267 (proton acceptor) is an active-site residue.

Belongs to the class I-like SAM-binding methyltransferase superfamily. Cation-independent O-methyltransferase family. As to quaternary structure, homodimer. In terms of tissue distribution, mainly expressed in stem and petiole trichomes.

The enzyme catalyses myricetin + S-adenosyl-L-methionine = laricitrin + S-adenosyl-L-homocysteine + H(+). Its pathway is flavonoid metabolism. Flavonoid 3'-O-methyltransferase involved in the biosynthesis of polymethoxylated flavonoids natural products such as myricetin derivatives, aroma compounds possessing antioxidant properties and exhibiting pharmacological activities such as anti-carcinogen, anti-viral, anti-thrombotic, anti-diabetic, anti-atherosclerotic, and anti-inflammatory effects. Catalyzes S-adenosylmethionine-dependent regioselective 3'-O-methylation of flavonoids; active on various hydroxylated flavonoid substrates, including myricetin, thus producing 3'-methyl myricetin (laricitrin). This chain is Myricetin 3'-O-methyltransferase 4, found in Solanum lycopersicum (Tomato).